We begin with the raw amino-acid sequence, 303 residues long: Heme A synthase (303 aa).

The Cytoplasmic portion of the chain corresponds to 1 to 8 (MFGKKNLK). The chain crosses the membrane as a helical span at residues 9-29 (WLGVVATLMMTFVQLGGALVT). Residues 30–67 (KTGSADGCGSSWPLCHGALIPEFFPIDTIIELSHRAVS) are Extracellular-facing. The cysteines at positions 37 and 44 are disulfide-linked. E60 is an active-site residue. A heme o-binding site is contributed by H63. Residues 68 to 88 (ALSLLMVLWLVITAWKHIGYI) form a helical membrane-spanning segment. The Cytoplasmic segment spans residues 89 to 93 (KEIKP). The helical transmembrane segment at 94–114 (LSIISVGFLLLQALIGAAAVI) threads the bilayer. At 115 to 125 (WQQNDYVLALH) the chain is on the extracellular side. H125 is a heme o binding site. Residues 126–146 (FGISLISFSSVFLITLIIFSI) traverse the membrane as a helical segment. The Cytoplasmic segment spans residues 147–163 (DQKYEADELYIKKPLRR). The helical transmembrane segment at 164–184 (LTWLMAIIIYCGVYTGALVRH) threads the bilayer. The Extracellular segment spans residues 185–215 (ADASLAYGGWPLPFHDLVPHSEQDWVQLTHR). H214 lines the heme b pocket. Residues 216–236 (IMAFIVFTIIMITYIHAVKNY) form a helical membrane-spanning segment. At 237–244 (PNNRTVHY) the chain is on the cytoplasmic side. A helical transmembrane segment spans residues 245-265 (GYTAAFILVILQVITGALSIM). Over 266-270 (TNVNL) the chain is Extracellular. The chain crosses the membrane as a helical span at residues 271-291 (LIALFHALFITYLFGMTTYFI). H276 lines the heme b pocket. Over 292 to 303 (MLMLRSVRSDKQ) the chain is Cytoplasmic.

This sequence belongs to the COX15/CtaA family. Type 1 subfamily. In terms of assembly, interacts with CtaB. The cofactor is heme b.

It is found in the cell membrane. The enzyme catalyses Fe(II)-heme o + 2 A + H2O = Fe(II)-heme a + 2 AH2. The protein operates within porphyrin-containing compound metabolism; heme A biosynthesis; heme A from heme O: step 1/1. Its function is as follows. Catalyzes the conversion of heme O to heme A by two successive hydroxylations of the methyl group at C8. The first hydroxylation forms heme I, the second hydroxylation results in an unstable dihydroxymethyl group, which spontaneously dehydrates, resulting in the formyl group of heme A. The protein is Heme A synthase of Staphylococcus aureus (strain MSSA476).